Reading from the N-terminus, the 192-residue chain is MKLVVGLGNPGEEYARTRHNVGFVVADRLAQLAGASFSAKKFAAELAEARLGPERVWIMKPQTYMNHSGEAVGAALRFWKLGLDDLVVVHDDLELDPYRVQLKVGGGHGGHNGVKSVNAHVGSPEYARVRVGVGRPPPRMDPADYVLGKFAKGEDAELDLCVEQAVEATRLAVELGAARAMNQVNRRSRAAE.

Y14 lines the tRNA pocket. H19 acts as the Proton acceptor in catalysis. TRNA is bound by residues Y64, N66, and N112.

This sequence belongs to the PTH family. Monomer.

It is found in the cytoplasm. It catalyses the reaction an N-acyl-L-alpha-aminoacyl-tRNA + H2O = an N-acyl-L-amino acid + a tRNA + H(+). Functionally, hydrolyzes ribosome-free peptidyl-tRNAs (with 1 or more amino acids incorporated), which drop off the ribosome during protein synthesis, or as a result of ribosome stalling. Its function is as follows. Catalyzes the release of premature peptidyl moieties from peptidyl-tRNA molecules trapped in stalled 50S ribosomal subunits, and thus maintains levels of free tRNAs and 50S ribosomes. In Anaeromyxobacter sp. (strain K), this protein is Peptidyl-tRNA hydrolase.